We begin with the raw amino-acid sequence, 82 residues long: Protein transport protein Sec61 subunit beta (82 aa).

Position 1 is an N-acetylmethionine (M1). The disordered stretch occupies residues 1 to 34 (MVGSGAPQRGSAAATASMRRRKPTSGAGGGGASG). Over 1 to 55 (MVGSGAPQRGSAAATASMRRRKPTSGAGGGGASGGAAGSMLQFYTDDAPGLKISP) the chain is Cytoplasmic. Residues 56–76 (NVVLIMSIGFIAFVAVLHVMG) form a helical membrane-spanning segment.

Belongs to the SEC61-beta family. Heterotrimeric complex composed of SEC61-alpha, SEC61-beta and SEC61-gamma.

The protein resides in the endoplasmic reticulum membrane. In terms of biological role, necessary for protein translocation in the endoplasmic reticulum. The sequence is that of Protein transport protein Sec61 subunit beta from Arabidopsis thaliana (Mouse-ear cress).